Here is a 132-residue protein sequence, read N- to C-terminus: D-ribose pyranase (132 aa).

Histidine 20 (proton donor) is an active-site residue. Residues aspartate 28, histidine 99, and 121 to 123 contribute to the substrate site; that span reads YSN.

The protein belongs to the RbsD / FucU family. RbsD subfamily. In terms of assembly, homodecamer.

The protein localises to the cytoplasm. It carries out the reaction beta-D-ribopyranose = beta-D-ribofuranose. Its pathway is carbohydrate metabolism; D-ribose degradation; D-ribose 5-phosphate from beta-D-ribopyranose: step 1/2. Its function is as follows. Catalyzes the interconversion of beta-pyran and beta-furan forms of D-ribose. This is D-ribose pyranase from Pseudomonas putida (strain W619).